A 628-amino-acid polypeptide reads, in one-letter code: Phosphomethylpyrimidine synthase (628 aa).

Substrate-binding positions include Asn228, Met257, Tyr286, His322, 342–344, 383–386, and Glu422; these read SRG and DGLR. His426 is a binding site for Zn(2+). Tyr449 is a substrate binding site. His490 is a Zn(2+) binding site. [4Fe-4S] cluster is bound by residues Cys570, Cys573, and Cys578.

Belongs to the ThiC family. Homodimer. [4Fe-4S] cluster serves as cofactor.

It carries out the reaction 5-amino-1-(5-phospho-beta-D-ribosyl)imidazole + S-adenosyl-L-methionine = 4-amino-2-methyl-5-(phosphooxymethyl)pyrimidine + CO + 5'-deoxyadenosine + formate + L-methionine + 3 H(+). Its pathway is cofactor biosynthesis; thiamine diphosphate biosynthesis. Its function is as follows. Catalyzes the synthesis of the hydroxymethylpyrimidine phosphate (HMP-P) moiety of thiamine from aminoimidazole ribotide (AIR) in a radical S-adenosyl-L-methionine (SAM)-dependent reaction. The protein is Phosphomethylpyrimidine synthase of Methylibium petroleiphilum (strain ATCC BAA-1232 / LMG 22953 / PM1).